We begin with the raw amino-acid sequence, 458 residues long: Ammonium transporter Rh type B (458 aa).

Residues 1–13 lie on the Cytoplasmic side of the membrane; it reads MAGSSRRAGGRRL. The chain crosses the membrane as a helical span at residues 14-34; it reads QLPLLCLLLQGATAILFAVFV. Over 35 to 61 the chain is Extracellular; that stretch reads RYNHETDAALWHWGNHSNPDNEFYFRY. N-linked (GlcNAc...) asparagine glycosylation occurs at asparagine 49. The chain crosses the membrane as a helical span at residues 62–82; that stretch reads PSFQDVHTMIFVGFGFLMAFL. Over 83 to 86 the chain is Cytoplasmic; the sequence is QRYG. A helical membrane pass occupies residues 87–107; sequence FSSVGFTFLLAAFALQWSTLV. Residues 108 to 124 are Extracellular-facing; that stretch reads QGFLHTFHGGHIHIGVE. The chain crosses the membrane as a helical span at residues 125 to 145; the sequence is SMINADFCAGAVLISFGAILG. At 146–149 the chain is on the cytoplasmic side; it reads KTGP. The helical transmembrane segment at 150-170 threads the bilayer; the sequence is AQLLLMALLEVVLFGLNEFVL. The Extracellular segment spans residues 171 to 178; it reads LSLLGVKD. A helical transmembrane segment spans residues 179-201; sequence AGGSMTIHTFGAYFGLVLSRVLY. Over 202-219 the chain is Cytoplasmic; that stretch reads RPQLEKSKHRQSSVYHSD. A helical transmembrane segment spans residues 220-240; sequence LFAMIGTIFLWIFWPSFNSAP. The Extracellular segment spans residues 241 to 251; that stretch reads TPLGDGQHRTA. Residues 252–272 form a helical membrane-spanning segment; sequence LNTYYSLTASTLSTFALSALV. The Cytoplasmic portion of the chain corresponds to 273–282; that stretch reads GRDGRLDMVH. A helical membrane pass occupies residues 283–303; it reads VQNAALAGGVVVGTSAEMMLT. Position 304 (proline 304) is a topological domain, extracellular. The chain crosses the membrane as a helical span at residues 305–325; the sequence is FGALAAGFLAGTVSTLGFKFF. Residues 326-346 are Cytoplasmic-facing; that stretch reads TPILESKFKIQDTCGVHNLHG. Residues 347 to 367 form a helical membrane-spanning segment; that stretch reads MPGVLGALLGVLVAGLATHDS. The Extracellular segment spans residues 368 to 393; the sequence is YGEGLESVFPLIAEGQRSSTSQALHQ. The helical transmembrane segment at 394–414 threads the bilayer; that stretch reads LFGLFVTLIFASVGGGLGGLL. The Cytoplasmic portion of the chain corresponds to 415-458; sequence LRLPFLDSPPDSQCYEDQIYWEVPEEHADLAQGSLRPEEPDTQA. An interaction with ANK3 region spans residues 416-424; it reads RLPFLDSPP. The Basolateral sorting signal signature appears at 429-432; sequence YEDQ.

This sequence belongs to the ammonium transporter (TC 2.A.49) family. Rh subfamily. In terms of assembly, interacts (via C-terminus) with ANK2 and ANK3; required for targeting to the basolateral membrane. In terms of processing, N-glycosylated.

The protein localises to the cell membrane. It is found in the basolateral cell membrane. It carries out the reaction NH4(+)(in) = NH4(+)(out). The catalysed reaction is methylamine(out) = methylamine(in). The enzyme catalyses CO2(out) = CO2(in). Ammonium transporter involved in the maintenance of acid-base homeostasis. Transports ammonium and its related derivative methylammonium across the basolateral plasma membrane of epithelial cells likely contributing to renal transepithelial ammonia transport and ammonia metabolism. May transport either NH4(+) or NH3 ammonia species predominantly mediating an electrogenic NH4(+) transport. May act as a CO2 channel providing for renal acid secretion. This chain is Ammonium transporter Rh type B (RHBG), found in Sus scrofa (Pig).